A 248-amino-acid polypeptide reads, in one-letter code: Ras-like protein family member 11B (248 aa).

Positions 29-246 are small GTPase-like; that stretch reads AGRRLVKIAV…ALSAKVRTVT (218 aa). Residues 40-47, 87-94, and 152-155 contribute to the GTP site; these read GASGVGKT, DTPGIQVH, and NKAD. Residues 205–226 form a disordered region; that stretch reads QQPSSTPEKRRTSLIPRPKSPN.

It belongs to the small GTPase superfamily. Ras family. Widely expressed with highest levels in placenta and primary macrophages.

It catalyses the reaction GTP + H2O = GDP + phosphate + H(+). The sequence is that of Ras-like protein family member 11B from Homo sapiens (Human).